Consider the following 542-residue polypeptide: Membrane protein insertase YidC (542 aa).

6 helical membrane-spanning segments follow: residues 6-26, 326-346, 350-370, 421-441, 458-478, and 501-521; these read NILLIGLLFVSFLLWQQWQTD, LVVDYGFLWWLAIPIHWLLMF, FVGNWGVAIILITLTVRGMLY, GGCLPILLQMPIFIALYWVLL, LSVQDPYYVLPLLMGVSMFLM, and VIFTVFFLWFPAGLVLYWLVG.

This sequence belongs to the OXA1/ALB3/YidC family. Type 1 subfamily. Interacts with the Sec translocase complex via SecD. Specifically interacts with transmembrane segments of nascent integral membrane proteins during membrane integration.

The protein resides in the cell inner membrane. Functionally, required for the insertion and/or proper folding and/or complex formation of integral membrane proteins into the membrane. Involved in integration of membrane proteins that insert both dependently and independently of the Sec translocase complex, as well as at least some lipoproteins. Aids folding of multispanning membrane proteins. The polypeptide is Membrane protein insertase YidC (Shewanella loihica (strain ATCC BAA-1088 / PV-4)).